The primary structure comprises 284 residues: MWGETFDDFENDEGEMAMAKQNLIAEPARADFTFAKLPLGIQPVDFMKTHFAETAGKSMQFRKGTTTLAFVYEPATPADKGGIIVAVDSRASSGEYISSKSVMKILDIGDRMVATMAGGAADCQFWTRIVAKYCTLYELREKTSITVSAASKYFANTLYGYRGQGLSVGSMVAGYDKKGPQIFKVDSEGDRCQLKVCSVGSGSLNAYGILDNHYKPKMTDDEARKLGLRAIMHATYRDSGSGGVCNLCHITPTEKIRLPPMDVSKLWYEFADELGRDITYNPVE.

A propeptide spans 1–64 (removed in mature form); sequence MWGETFDDFE…AGKSMQFRKG (64 aa). Thr-65 serves as the catalytic Nucleophile.

This sequence belongs to the peptidase T1B family. As to quaternary structure, the 26S proteasome consists of a 20S proteasome core and two 19S regulatory subunits. The 20S proteasome core is composed of 28 subunits that are arranged in four stacked rings, resulting in a barrel-shaped structure. The two end rings are each formed by seven alpha subunits, and the two central rings are each formed by seven beta subunits. The catalytic chamber with the active sites is on the inside of the barrel.

The protein resides in the cytoplasm. It localises to the nucleus. The enzyme catalyses Cleavage of peptide bonds with very broad specificity.. Component of the 20S core proteasome complex involved in the proteolytic degradation of most intracellular proteins. This complex plays numerous essential roles within the cell by associating with different regulatory particles. Associated with two 19S regulatory particles, forms the 26S proteasome and thus participates in the ATP-dependent degradation of ubiquitinated proteins. The 26S proteasome plays a key role in the maintenance of protein homeostasis by removing misfolded or damaged proteins that could impair cellular functions, and by removing proteins whose functions are no longer required. This chain is Proteasome subunit pbs-5, found in Caenorhabditis elegans.